Here is a 205-residue protein sequence, read N- to C-terminus: Holliday junction resolvase RecU (205 aa).

The tract at residues methionine 1 to serine 26 is disordered. The Mg(2+) site is built by threonine 86, aspartate 88, glutamate 101, and glutamine 120.

The protein belongs to the RecU family. The cofactor is Mg(2+).

The protein localises to the cytoplasm. It carries out the reaction Endonucleolytic cleavage at a junction such as a reciprocal single-stranded crossover between two homologous DNA duplexes (Holliday junction).. Its function is as follows. Endonuclease that resolves Holliday junction intermediates in genetic recombination. Cleaves mobile four-strand junctions by introducing symmetrical nicks in paired strands. Promotes annealing of linear ssDNA with homologous dsDNA. Required for DNA repair, homologous recombination and chromosome segregation. This Bacillus pumilus (strain SAFR-032) protein is Holliday junction resolvase RecU.